A 462-amino-acid chain; its full sequence is Glycoprotein endo-alpha-1,2-mannosidase (462 aa).

Topologically, residues 1–8 (MAKFRRGT) are cytoplasmic. The helical; Signal-anchor for type II membrane protein transmembrane segment at 9–29 (CIILALFILFIFSLMMGLKML) threads the bilayer. At 30–462 (RPNTATFGAP…YALDHQLPVS (433 aa)) the chain is on the lumenal side. A catalytic region spans residues 60–462 (DFQKSDRINS…YALDHQLPVS (403 aa)).

It belongs to the glycosyl hydrolase 99 family. In terms of processing, undergoes proteolytic cleavage in the C-terminal region.

Its subcellular location is the golgi apparatus membrane. The catalysed reaction is N-{alpha-Glc-(1-&gt;3)-alpha-Man-(1-&gt;2)-alpha-Man-(1-&gt;2)-alpha-Man-(1-&gt;3)-[alpha-Man-(1-&gt;2)-alpha-Man-(1-&gt;3)-[alpha-Man-(1-&gt;2)-alpha-Man-(1-&gt;6)]-alpha-Man-(1-&gt;6)]-beta-Man-(1-&gt;4)-beta-GlcNAc-(1-&gt;4)-beta-GlcNAc}-L-asparaginyl-[protein] + H2O = alpha-D-glucosyl-(1-&gt;3)-D-mannopyranose + N(4)-{alpha-D-Man-(1-&gt;2)-alpha-D-Man-(1-&gt;3)-[alpha-D-Man-(1-&gt;2)-alpha-D-Man-(1-&gt;3)-[alpha-D-Man-(1-&gt;2)-alpha-D-Man-(1-&gt;6)]-alpha-D-Man-(1-&gt;6)]-beta-D-Man-(1-&gt;4)-beta-D-GlaNAc-(1-&gt;4)-beta-D-GlcNAc}-L-asparaginyl-[protein] (N-glucan mannose isomer 8A1,2,3B1,2). This chain is Glycoprotein endo-alpha-1,2-mannosidase (MANEA), found in Pongo abelii (Sumatran orangutan).